Here is a 185-residue protein sequence, read N- to C-terminus: Small ribosomal subunit protein uS5 (185 aa).

An S5 DRBM domain is found at 29–92 (LEEKVVKINR…EKAKKQLVRI (64 aa)).

Belongs to the universal ribosomal protein uS5 family. In terms of assembly, part of the 30S ribosomal subunit. Contacts proteins S4 and S8.

Its function is as follows. With S4 and S12 plays an important role in translational accuracy. In terms of biological role, located at the back of the 30S subunit body where it stabilizes the conformation of the head with respect to the body. The chain is Small ribosomal subunit protein uS5 from Aster yellows witches'-broom phytoplasma (strain AYWB).